A 113-amino-acid chain; its full sequence is Small ribosomal subunit protein uS15 (113 aa).

Belongs to the universal ribosomal protein uS15 family. As to quaternary structure, part of the 30S ribosomal subunit. Forms a bridge to the 50S subunit in the 70S ribosome, contacting the 23S rRNA.

Functionally, one of the primary rRNA binding proteins, it binds directly to 16S rRNA where it helps nucleate assembly of the platform of the 30S subunit by binding and bridging several RNA helices of the 16S rRNA. In terms of biological role, forms an intersubunit bridge (bridge B4) with the 23S rRNA of the 50S subunit in the ribosome. The chain is Small ribosomal subunit protein uS15 from Haemophilus influenzae (strain PittEE).